Consider the following 158-residue polypeptide: Phosphopantetheine adenylyltransferase (158 aa).

Residue Thr9 participates in substrate binding. ATP is bound by residues 9 to 10 (TF) and His17. Positions 41, 73, and 87 each coordinate substrate. ATP-binding positions include 88 to 90 (GVR), Glu98, and 123 to 129 (WSYVSST).

The protein belongs to the bacterial CoaD family. In terms of assembly, homohexamer. It depends on Mg(2+) as a cofactor.

Its subcellular location is the cytoplasm. It carries out the reaction (R)-4'-phosphopantetheine + ATP + H(+) = 3'-dephospho-CoA + diphosphate. It participates in cofactor biosynthesis; coenzyme A biosynthesis; CoA from (R)-pantothenate: step 4/5. Its function is as follows. Reversibly transfers an adenylyl group from ATP to 4'-phosphopantetheine, yielding dephospho-CoA (dPCoA) and pyrophosphate. The protein is Phosphopantetheine adenylyltransferase of Histophilus somni (strain 2336) (Haemophilus somnus).